Consider the following 147-residue polypeptide: uncharacterized protein (147 aa).

This is an uncharacterized protein from Acidianus convivator (ATV).